The primary structure comprises 312 residues: MDIIFYHPTFDTQWWIEALRKAIPQARVRAWKSGDNDSADYALAWHPPVEMLAGRDLKAVFALGAGVDSILSKLQAHPEMLKPSVPLFRLEDTGMGEQMQEYAVSQVLHWFRRFDDYRIQQNSSHWQPLPEYHREDFTIGILGAGVLGSKVAQSLQTWRFPLRCWSRTRKSWPGVQSFAGWEELSAFLSQCRVLINLLPNTPETVGIINQQLLEKLPDGAYLLNLARGVHVVEDDLLAALDSGKVKGAMLDVFNREPLPPESPLWQHPRVTITPHVAAITRPAEAVEYISRTIAQLEKGERVCGQVDRARGY.

Arginine 227 is a catalytic residue. Histidine 275 acts as the Proton donor in catalysis.

Belongs to the D-isomer specific 2-hydroxyacid dehydrogenase family. GhrA subfamily.

The protein localises to the cytoplasm. The enzyme catalyses glycolate + NADP(+) = glyoxylate + NADPH + H(+). It carries out the reaction (R)-glycerate + NAD(+) = 3-hydroxypyruvate + NADH + H(+). It catalyses the reaction (R)-glycerate + NADP(+) = 3-hydroxypyruvate + NADPH + H(+). Catalyzes the NADPH-dependent reduction of glyoxylate and hydroxypyruvate into glycolate and glycerate, respectively. The protein is Glyoxylate/hydroxypyruvate reductase A of Escherichia coli O157:H7.